Reading from the N-terminus, the 139-residue chain is Aspartate 1-decarboxylase (139 aa).

Ser26 acts as the Schiff-base intermediate with substrate; via pyruvic acid in catalysis. Ser26 bears the Pyruvic acid (Ser) mark. Thr58 lines the substrate pocket. Catalysis depends on Tyr59, which acts as the Proton donor. 72-74 (GGA) is a binding site for substrate.

It belongs to the PanD family. As to quaternary structure, heterooctamer of four alpha and four beta subunits. Pyruvate is required as a cofactor. Is synthesized initially as an inactive proenzyme, which is activated by self-cleavage at a specific serine bond to produce a beta-subunit with a hydroxyl group at its C-terminus and an alpha-subunit with a pyruvoyl group at its N-terminus.

It is found in the cytoplasm. The enzyme catalyses L-aspartate + H(+) = beta-alanine + CO2. Its pathway is cofactor biosynthesis; (R)-pantothenate biosynthesis; beta-alanine from L-aspartate: step 1/1. Functionally, catalyzes the pyruvoyl-dependent decarboxylation of aspartate to produce beta-alanine. This chain is Aspartate 1-decarboxylase, found in Microcystis aeruginosa (strain NIES-843 / IAM M-2473).